A 122-amino-acid polypeptide reads, in one-letter code: Large ribosomal subunit protein uL14c (122 aa).

This sequence belongs to the universal ribosomal protein uL14 family. As to quaternary structure, part of the 50S ribosomal subunit.

Its subcellular location is the plastid. The protein resides in the chloroplast. Its function is as follows. Binds to 23S rRNA. In Manihot esculenta (Cassava), this protein is Large ribosomal subunit protein uL14c.